The primary structure comprises 185 residues: Meiotically up-regulated gene 5 protein (185 aa).

The protein localises to the cytoplasm. In terms of biological role, required for correct meiotic chromosome segregation. The polypeptide is Meiotically up-regulated gene 5 protein (mug5) (Schizosaccharomyces pombe (strain 972 / ATCC 24843) (Fission yeast)).